The chain runs to 203 residues: Transcriptional regulator GfcR (203 aa).

The protein belongs to the purine/pyrimidine phosphoribosyltransferase family. GfcR subfamily.

This is Transcriptional regulator GfcR from Methanothrix thermoacetophila (strain DSM 6194 / JCM 14653 / NBRC 101360 / PT) (Methanosaeta thermophila).